The following is a 365-amino-acid chain: NADH-quinone oxidoreductase subunit H (365 aa).

The next 8 helical transmembrane spans lie at 27–47 (LLLI…LTFA), 99–119 (FLFL…WAVV), 133–153 (ALLY…IAGW), 168–188 (AAQV…VLMM), 206–226 (FLNW…ISGV), 268–288 (ILVA…PVDI), 294–314 (IPGV…FLWF), and 329–349 (LGWK…GAVM).

The protein belongs to the complex I subunit 1 family. NDH-1 is composed of 14 different subunits. Subunits NuoA, H, J, K, L, M, N constitute the membrane sector of the complex.

Its subcellular location is the cell inner membrane. It carries out the reaction a quinone + NADH + 5 H(+)(in) = a quinol + NAD(+) + 4 H(+)(out). In terms of biological role, NDH-1 shuttles electrons from NADH, via FMN and iron-sulfur (Fe-S) centers, to quinones in the respiratory chain. The immediate electron acceptor for the enzyme in this species is believed to be ubiquinone. Couples the redox reaction to proton translocation (for every two electrons transferred, four hydrogen ions are translocated across the cytoplasmic membrane), and thus conserves the redox energy in a proton gradient. This subunit may bind ubiquinone. The sequence is that of NADH-quinone oxidoreductase subunit H from Nitrosomonas eutropha (strain DSM 101675 / C91 / Nm57).